The sequence spans 155 residues: S-ribosylhomocysteine lyase (155 aa).

Fe cation is bound by residues His-57, His-61, and Cys-124.

It belongs to the LuxS family. In terms of assembly, homodimer. It depends on Fe cation as a cofactor.

It catalyses the reaction S-(5-deoxy-D-ribos-5-yl)-L-homocysteine = (S)-4,5-dihydroxypentane-2,3-dione + L-homocysteine. In terms of biological role, involved in the synthesis of autoinducer 2 (AI-2) which is secreted by bacteria and is used to communicate both the cell density and the metabolic potential of the environment. The regulation of gene expression in response to changes in cell density is called quorum sensing. Catalyzes the transformation of S-ribosylhomocysteine (RHC) to homocysteine (HC) and 4,5-dihydroxy-2,3-pentadione (DPD). The polypeptide is S-ribosylhomocysteine lyase (Listeria monocytogenes serotype 4a (strain HCC23)).